Consider the following 196-residue polypeptide: Molybdenum cofactor guanylyltransferase (196 aa).

GTP is bound by residues 10–12 (LAG), lysine 23, asparagine 51, aspartate 69, and aspartate 99. Aspartate 99 is a Mg(2+) binding site.

It belongs to the MobA family. As to quaternary structure, monomer. Requires Mg(2+) as cofactor.

Its subcellular location is the cytoplasm. The catalysed reaction is Mo-molybdopterin + GTP + H(+) = Mo-molybdopterin guanine dinucleotide + diphosphate. In terms of biological role, transfers a GMP moiety from GTP to Mo-molybdopterin (Mo-MPT) cofactor (Moco or molybdenum cofactor) to form Mo-molybdopterin guanine dinucleotide (Mo-MGD) cofactor. This Shewanella baltica (strain OS185) protein is Molybdenum cofactor guanylyltransferase.